A 73-amino-acid polypeptide reads, in one-letter code: MIEVVVNDRLGKKVRVKCLAEDSVGDFKKVLSLQIGTQPNKIVLQKGGSVLKDHISLEDYEVHDQTNLELYYL.

One can recognise a Ubiquitin-like domain in the interval 1–73 (MIEVVVNDRL…DQTNLELYYL (73 aa)).

Its function is as follows. Forms conjugate with SPH1 and HBT1. Involved in morphogenesis. The polypeptide is Ubiquitin-like modifier HUB1 (HUB1) (Saccharomyces cerevisiae (strain ATCC 204508 / S288c) (Baker's yeast)).